The sequence spans 415 residues: Plasminogen activator inhibitor 2 (415 aa).

The cysteines at positions 5 and 405 are disulfide-linked. 3 N-linked (GlcNAc...) asparagine glycosylation sites follow: N75, N115, and N339.

Belongs to the serpin family. Ov-serpin subfamily. In terms of assembly, interacts with PSMB1. In terms of processing, the signal sequence is not cleaved.

Its subcellular location is the cytoplasm. The protein resides in the secreted. The protein localises to the extracellular space. Inhibits urokinase-type plasminogen activator. The monocyte derived PAI-2 is distinct from the endothelial cell-derived PAI-1. This is Plasminogen activator inhibitor 2 (SERPINB2) from Homo sapiens (Human).